Here is an 871-residue protein sequence, read N- to C-terminus: Protein translocase subunit SecA (871 aa).

Residues Gln-80, 98–102 (GEGKT), and Asp-537 contribute to the ATP site.

This sequence belongs to the SecA family. Monomer and homodimer. Part of the essential Sec protein translocation apparatus which comprises SecA, SecYEG and auxiliary proteins SecDF. Other proteins may also be involved.

It is found in the cell inner membrane. The protein resides in the cytoplasm. It carries out the reaction ATP + H2O + cellular proteinSide 1 = ADP + phosphate + cellular proteinSide 2.. In terms of biological role, part of the Sec protein translocase complex. Interacts with the SecYEG preprotein conducting channel. Has a central role in coupling the hydrolysis of ATP to the transfer of proteins into and across the cell membrane, serving as an ATP-driven molecular motor driving the stepwise translocation of polypeptide chains across the membrane. This Thermotoga sp. (strain RQ2) protein is Protein translocase subunit SecA.